The sequence spans 765 residues: MFNITNIQSTARHQSISNEASTEVPLKEEIWNKISAFFSSEHQVEAQNCIAYLCHPPETASPEEIKSKFECLRMLAFPAYADNIQYSRGGADQYCILSENSQEILSIVFNTEGYTVEGGGKSVTYTRVTESEQASSASGSKDAVNYELIWSEWVKEAPAKEAANREEAVQRMRDCLKNNKTELRLKILGLTTIPAYIPEQITTLILDNNELKSLPENLQGNIKTLYANSNQLTSIPATLPDTIQEMELSINRITELPERLPSALQSLDLFHNKISCLPENLPEELRYLSVYDNSIRTLPAHLPSEITHLNVQSNSLTALPETLPPGLKTLEAGENALTSLPASLPPELQVLDVSKNQITVLPETLPPTITTLDVSRNALTNLPENLPAALQIMQASRNNLVRLPESLPHFRGEGPQPTRIIVEYNPFSERTIQNMQRLMSSVDYQGPRVLFAMGDFSIVRVTRPLHQAVQGWLTSLEEEDVNQWRAFEAEANAAAFSGFLDYLGDTQNTRHPDFKEQVSAWLMRLAEDSALRETVFIIAMNATISCEDRVTLAYHQMQEATLVHDAERGAFDSHLAELIMAGREIFRLEQIESLAREKVKRLFFIDEVEVFLGFQNQLRESLSLTTMTRDMRFYNVSGITESDLDEAEIRIKMAENRDFHKWFALWGPWHKVLERIAPEEWREMMAKRDECIETDEYQSRVNAELEDLRIADDSDAERTTEVQMDAERAIGIKIMEEINQTLFTEIMENILLKKEVSSLMSAYWR.

The segment at 1 to 453 is interaction with target proteins; the sequence is MFNITNIQST…YQGPRVLFAM (453 aa). 10 LRR repeats span residues 200–219, 221–242, 243–262, 263–284, 285–305, 306–325, 326–346, 347–368, 369–389, and 390–410; these read QITTLILDNNELKSLPENLQ, NIKTLYANSNQLTSIPATLPDT, IQEMELSINRITELPERLPS, ALQSLDLFHNKISCLPENLPEE, LRYLSVYDNSIRTLPAHLPSE, ITHLNVQSNSLTALPETLPP, GLKTLEAGENALTSLPASLPP, ELQVLDVSKNQITVLPETLPPT, ITTLDVSRNALTNLPENLPAA, and LQIMQASRNNLVRLPESLPHF. Residues 454–461 are linker; the sequence is GDFSIVRV. The E3 ubiquitin-protein ligase catalytic domain stretch occupies residues 462–765; sequence TRPLHQAVQG…VSSLMSAYWR (304 aa). The NEL domain occupies 464–758; sequence PLHQAVQGWL…NILLKKEVSS (295 aa). Catalysis depends on Cys546, which acts as the Glycyl thioester intermediate.

It belongs to the LRR-containing bacterial E3 ligase family. Interacts with host TXN. Post-translationally, ubiquitinated in the presence of host E1 ubiquitin-activating enzyme, E2 ubiquitin-conjugating enzyme and ubiquitin.

The protein resides in the secreted. It is found in the host cytoplasm. It carries out the reaction S-ubiquitinyl-[E2 ubiquitin-conjugating enzyme]-L-cysteine + [acceptor protein]-L-lysine = [E2 ubiquitin-conjugating enzyme]-L-cysteine + N(6)-ubiquitinyl-[acceptor protein]-L-lysine.. Effector proteins function to alter host cell physiology and promote bacterial survival in host tissues. This protein is an E3 ubiquitin ligase that interferes with host's ubiquitination pathway. Can ubiquitinate both ubiquitin and host TXN (thioredoxin). Leads to significant decrease of thioredoxin activity and increase of host cell death. In Salmonella typhimurium (strain 14028s / SGSC 2262), this protein is E3 ubiquitin-protein ligase SlrP (slrP).